Here is a 350-residue protein sequence, read N- to C-terminus: Glutamyl-tRNA reductase (350 aa).

Residues 53 to 56, Ser105, 110 to 112, and Gln116 contribute to the substrate site; these read TCNR and ETQ. Cys54 (nucleophile) is an active-site residue. 185–190 is an NADP(+) binding site; sequence GAGETA.

This sequence belongs to the glutamyl-tRNA reductase family. Homodimer.

It carries out the reaction (S)-4-amino-5-oxopentanoate + tRNA(Glu) + NADP(+) = L-glutamyl-tRNA(Glu) + NADPH + H(+). Its pathway is porphyrin-containing compound metabolism; protoporphyrin-IX biosynthesis; 5-aminolevulinate from L-glutamyl-tRNA(Glu): step 1/2. In terms of biological role, catalyzes the NADPH-dependent reduction of glutamyl-tRNA(Glu) to glutamate 1-semialdehyde (GSA). This Deinococcus radiodurans (strain ATCC 13939 / DSM 20539 / JCM 16871 / CCUG 27074 / LMG 4051 / NBRC 15346 / NCIMB 9279 / VKM B-1422 / R1) protein is Glutamyl-tRNA reductase.